Reading from the N-terminus, the 957-residue chain is Glycine dehydrogenase (decarboxylating) (957 aa).

At Lys-708 the chain carries N6-(pyridoxal phosphate)lysine.

Belongs to the GcvP family. In terms of assembly, the glycine cleavage system is composed of four proteins: P, T, L and H. It depends on pyridoxal 5'-phosphate as a cofactor.

The catalysed reaction is N(6)-[(R)-lipoyl]-L-lysyl-[glycine-cleavage complex H protein] + glycine + H(+) = N(6)-[(R)-S(8)-aminomethyldihydrolipoyl]-L-lysyl-[glycine-cleavage complex H protein] + CO2. Its function is as follows. The glycine cleavage system catalyzes the degradation of glycine. The P protein binds the alpha-amino group of glycine through its pyridoxal phosphate cofactor; CO(2) is released and the remaining methylamine moiety is then transferred to the lipoamide cofactor of the H protein. The protein is Glycine dehydrogenase (decarboxylating) of Salmonella paratyphi B (strain ATCC BAA-1250 / SPB7).